Reading from the N-terminus, the 273-residue chain is 4-hydroxy-tetrahydrodipicolinate reductase (273 aa).

Residues G12–M17 and E38 contribute to the NAD(+) site. Residue R39 participates in NADP(+) binding. NAD(+)-binding positions include G102 to T104 and A126 to F129. The active-site Proton donor/acceptor is H159. H160 is a (S)-2,3,4,5-tetrahydrodipicolinate binding site. K163 (proton donor) is an active-site residue. Residue G169 to T170 participates in (S)-2,3,4,5-tetrahydrodipicolinate binding.

This sequence belongs to the DapB family. As to quaternary structure, homotetramer.

The protein resides in the cytoplasm. It carries out the reaction (S)-2,3,4,5-tetrahydrodipicolinate + NAD(+) + H2O = (2S,4S)-4-hydroxy-2,3,4,5-tetrahydrodipicolinate + NADH + H(+). It catalyses the reaction (S)-2,3,4,5-tetrahydrodipicolinate + NADP(+) + H2O = (2S,4S)-4-hydroxy-2,3,4,5-tetrahydrodipicolinate + NADPH + H(+). The protein operates within amino-acid biosynthesis; L-lysine biosynthesis via DAP pathway; (S)-tetrahydrodipicolinate from L-aspartate: step 4/4. In terms of biological role, catalyzes the conversion of 4-hydroxy-tetrahydrodipicolinate (HTPA) to tetrahydrodipicolinate. The chain is 4-hydroxy-tetrahydrodipicolinate reductase from Shigella sonnei (strain Ss046).